The chain runs to 305 residues: 4-diphosphocytidyl-2-C-methyl-D-erythritol kinase (305 aa).

The active site involves Lys17. 111-121 provides a ligand contact to ATP; that stretch reads PVASGIGGGSA. Asp154 is a catalytic residue.

Belongs to the GHMP kinase family. IspE subfamily.

It carries out the reaction 4-CDP-2-C-methyl-D-erythritol + ATP = 4-CDP-2-C-methyl-D-erythritol 2-phosphate + ADP + H(+). It participates in isoprenoid biosynthesis; isopentenyl diphosphate biosynthesis via DXP pathway; isopentenyl diphosphate from 1-deoxy-D-xylulose 5-phosphate: step 3/6. In terms of biological role, catalyzes the phosphorylation of the position 2 hydroxy group of 4-diphosphocytidyl-2C-methyl-D-erythritol. In Gluconacetobacter diazotrophicus (strain ATCC 49037 / DSM 5601 / CCUG 37298 / CIP 103539 / LMG 7603 / PAl5), this protein is 4-diphosphocytidyl-2-C-methyl-D-erythritol kinase.